Consider the following 118-residue polypeptide: MRHYELMVILDPSLDERTVAPSLENFLNVIRNDGGSVEKVDVWGRRRLAYEIDKQAEGIYVVLDLNSEPASVKELDRQLNLNETVLRTKVLRRVVEPRKAARVARAAAKAKNRPEASV.

The protein belongs to the bacterial ribosomal protein bS6 family.

Binds together with bS18 to 16S ribosomal RNA. In Saccharopolyspora erythraea (strain ATCC 11635 / DSM 40517 / JCM 4748 / NBRC 13426 / NCIMB 8594 / NRRL 2338), this protein is Small ribosomal subunit protein bS6.